Here is a 285-residue protein sequence, read N- to C-terminus: MSLETLPTLREALEAHGLWAKKAFGQHFLLDLNITRKIARLAQVGDGDVVIEVGPGPGGLTRALLETGARVIAVEKDERFRPLLQEVADAAPHLTLVFGDALTADEAALSAGRPAHLVSNLPYNVGTPLLIKWLTGPWTPASLTLMFQKEVADRITAAPGEDAYGRLAVIAQATADARPVMDVPARAFTPPPKVESAVVRLEPRAARPSPERLDALQKVTAAAFGQRRKMLRSSLKALGGEPLITAAGLDPAARAEVVPVAGFLALADAWLARREAPATAAPRGR.

Positions 27, 29, 54, 75, 100, and 120 each coordinate S-adenosyl-L-methionine.

Belongs to the class I-like SAM-binding methyltransferase superfamily. rRNA adenine N(6)-methyltransferase family. RsmA subfamily.

Its subcellular location is the cytoplasm. The enzyme catalyses adenosine(1518)/adenosine(1519) in 16S rRNA + 4 S-adenosyl-L-methionine = N(6)-dimethyladenosine(1518)/N(6)-dimethyladenosine(1519) in 16S rRNA + 4 S-adenosyl-L-homocysteine + 4 H(+). In terms of biological role, specifically dimethylates two adjacent adenosines (A1518 and A1519) in the loop of a conserved hairpin near the 3'-end of 16S rRNA in the 30S particle. May play a critical role in biogenesis of 30S subunits. This Phenylobacterium zucineum (strain HLK1) protein is Ribosomal RNA small subunit methyltransferase A.